A 238-amino-acid chain; its full sequence is MPLPVSITTLLLDIEGTTTPVDFVFKVLFPYARDRVADFLATQGADPEVQADLDLLRQEYAQEAAAELPDWAGEDAIAAVPYIQWLIDSDRKSTGLKSLQGKIWEQGYVSGEIKGQLFADVLPAFQRWQAAGLAIAIFSSGSVQAQQLLFGYSEAGDLSPHLSGYFDTRTGPKREAASYGAIAAQLGKAPAQVLFVSDIPAELEAAATAGFQTRLSLRPGNATVEIGDWTTIHSFDEL.

Belongs to the HAD-like hydrolase superfamily. MasA/MtnC family. As to quaternary structure, monomer. It depends on Mg(2+) as a cofactor.

The catalysed reaction is 5-methylsulfanyl-2,3-dioxopentyl phosphate + H2O = 1,2-dihydroxy-5-(methylsulfanyl)pent-1-en-3-one + phosphate. Its pathway is amino-acid biosynthesis; L-methionine biosynthesis via salvage pathway; L-methionine from S-methyl-5-thio-alpha-D-ribose 1-phosphate: step 3/6. The protein operates within amino-acid biosynthesis; L-methionine biosynthesis via salvage pathway; L-methionine from S-methyl-5-thio-alpha-D-ribose 1-phosphate: step 4/6. Its function is as follows. Bifunctional enzyme that catalyzes the enolization of 2,3-diketo-5-methylthiopentyl-1-phosphate (DK-MTP-1-P) into the intermediate 2-hydroxy-3-keto-5-methylthiopentenyl-1-phosphate (HK-MTPenyl-1-P), which is then dephosphorylated to form the acireductone 1,2-dihydroxy-3-keto-5-methylthiopentene (DHK-MTPene). The protein is Enolase-phosphatase E1 of Synechococcus elongatus (strain ATCC 33912 / PCC 7942 / FACHB-805) (Anacystis nidulans R2).